Consider the following 231-residue polypeptide: Ribose-5-phosphate isomerase A (231 aa).

Substrate contacts are provided by residues 32 to 35, 85 to 88, and 98 to 101; these read TGST, DGAD, and KGGG. Glu107 (proton acceptor) is an active-site residue. Lys125 is a binding site for substrate.

This sequence belongs to the ribose 5-phosphate isomerase family. Homodimer.

The catalysed reaction is aldehydo-D-ribose 5-phosphate = D-ribulose 5-phosphate. It functions in the pathway carbohydrate degradation; pentose phosphate pathway; D-ribose 5-phosphate from D-ribulose 5-phosphate (non-oxidative stage): step 1/1. Functionally, catalyzes the reversible conversion of ribose-5-phosphate to ribulose 5-phosphate. The chain is Ribose-5-phosphate isomerase A from Burkholderia cenocepacia (strain ATCC BAA-245 / DSM 16553 / LMG 16656 / NCTC 13227 / J2315 / CF5610) (Burkholderia cepacia (strain J2315)).